The following is a 234-amino-acid chain: Thiamine-phosphate synthase (234 aa).

4-amino-2-methyl-5-(diphosphooxymethyl)pyrimidine is bound by residues glutamine 52 to lysine 56 and asparagine 84. Mg(2+)-binding residues include aspartate 85 and aspartate 104. Serine 123 contacts 4-amino-2-methyl-5-(diphosphooxymethyl)pyrimidine. Serine 150–threonine 152 lines the 2-[(2R,5Z)-2-carboxy-4-methylthiazol-5(2H)-ylidene]ethyl phosphate pocket. Lysine 153 is a binding site for 4-amino-2-methyl-5-(diphosphooxymethyl)pyrimidine. Residue glycine 180 participates in 2-[(2R,5Z)-2-carboxy-4-methylthiazol-5(2H)-ylidene]ethyl phosphate binding.

Belongs to the thiamine-phosphate synthase family. It depends on Mg(2+) as a cofactor.

The enzyme catalyses 2-[(2R,5Z)-2-carboxy-4-methylthiazol-5(2H)-ylidene]ethyl phosphate + 4-amino-2-methyl-5-(diphosphooxymethyl)pyrimidine + 2 H(+) = thiamine phosphate + CO2 + diphosphate. It carries out the reaction 2-(2-carboxy-4-methylthiazol-5-yl)ethyl phosphate + 4-amino-2-methyl-5-(diphosphooxymethyl)pyrimidine + 2 H(+) = thiamine phosphate + CO2 + diphosphate. The catalysed reaction is 4-methyl-5-(2-phosphooxyethyl)-thiazole + 4-amino-2-methyl-5-(diphosphooxymethyl)pyrimidine + H(+) = thiamine phosphate + diphosphate. It functions in the pathway cofactor biosynthesis; thiamine diphosphate biosynthesis; thiamine phosphate from 4-amino-2-methyl-5-diphosphomethylpyrimidine and 4-methyl-5-(2-phosphoethyl)-thiazole: step 1/1. Functionally, condenses 4-methyl-5-(beta-hydroxyethyl)thiazole monophosphate (THZ-P) and 2-methyl-4-amino-5-hydroxymethyl pyrimidine pyrophosphate (HMP-PP) to form thiamine monophosphate (TMP). The polypeptide is Thiamine-phosphate synthase (Nitrosospira multiformis (strain ATCC 25196 / NCIMB 11849 / C 71)).